We begin with the raw amino-acid sequence, 470 residues long: MNPNQKILCTSATALVIGTIAVLIGIVNLGLNIGLHLKPSCNCSRSQPEATNASQTIINNYYNETNITQISNTNIQVEERASREFNNLTKGLCTINSWHIYGKDNAVRIGEDSDVLVTREPYVSCDPDECRFYALSQGTTIRGKHSNGTIHDRSQYRDLISWPLSSPPTVYNSRVECIGWSSTSCHDGRARMSICISGPNNNASAVIWYNRRPVTEINTWARNILRTQESECVCQNGVCPVVFTDGSATGPAETRIYYFKEGKILKWEPLTGTAKHIEECSCYGEQAGVTCTCRDNWQGSNRPVIQIDPVAMTHTSQYICSPVLTDNPRPNDPTVGKCNDPYPGNNNNGVKGFSYLDGGNTWLGRTISIASRSGYEMLKVPNALTDDRSKPTQGQTIVLNTDWSGYSGSFMDYWAEGECYRACFYVELIRGRPKEDKVWWTSNSIVSMCSSTEFLGQWNWPDGAKIEYFL.

Residues 1-14 (MNPNQKILCTSATA) lie on the Intravirion side of the membrane. The tract at residues 11–33 (SATALVIGTIAVLIGIVNLGLNI) is involved in apical transport and lipid raft association. A helical transmembrane segment spans residues 15 to 35 (LVIGTIAVLIGIVNLGLNIGL). The segment at 36-89 (HLKPSCNCSRSQPEATNASQTIINNYYNETNITQISNTNIQVEERASREFNNLT) is hypervariable stalk region. Over 36–470 (HLKPSCNCSR…PDGAKIEYFL (435 aa)) the chain is Virion surface. Residues Asn42, Asn52, Asn63, Asn66, and Asn87 are each glycosylated (N-linked (GlcNAc...) asparagine; by host). A head of neuraminidase region spans residues 92 to 470 (LCTINSWHIY…PDGAKIEYFL (379 aa)). Cystine bridges form between Cys93/Cys419, Cys125/Cys130, Cys177/Cys195, Cys185/Cys232, Cys234/Cys239, Cys280/Cys293, Cys282/Cys291, Cys320/Cys338, and Cys423/Cys449. Arg119 is a substrate binding site. Asn147 carries an N-linked (GlcNAc...) asparagine; by host glycan. Asp152 (proton donor/acceptor) is an active-site residue. Arg153 is a substrate binding site. An N-linked (GlcNAc...) asparagine; by host glycan is attached at Asn202. N-linked (GlcNAc...) (high mannose) asparagine; by host glycosylation occurs at Asn202. 278–279 (EE) contributes to the substrate binding site. Substrate is bound at residue Arg294. Ca(2+) contacts are provided by Asp295, Gly299, Asp326, and Asn348. Arg372 contributes to the substrate binding site. The Nucleophile role is filled by Tyr406.

The protein belongs to the glycosyl hydrolase 34 family. Homotetramer. The cofactor is Ca(2+). N-glycosylated.

It is found in the virion membrane. The protein resides in the host apical cell membrane. The catalysed reaction is Hydrolysis of alpha-(2-&gt;3)-, alpha-(2-&gt;6)-, alpha-(2-&gt;8)- glycosidic linkages of terminal sialic acid residues in oligosaccharides, glycoproteins, glycolipids, colominic acid and synthetic substrates.. With respect to regulation, inhibited by the neuraminidase inhibitors zanamivir (Relenza) and oseltamivir (Tamiflu). These drugs interfere with the release of progeny virus from infected cells and are effective against all influenza strains. Resistance to neuraminidase inhibitors is quite rare. Its function is as follows. Catalyzes the removal of terminal sialic acid residues from viral and cellular glycoconjugates. Cleaves off the terminal sialic acids on the glycosylated HA during virus budding to facilitate virus release. Additionally helps virus spread through the circulation by further removing sialic acids from the cell surface. These cleavages prevent self-aggregation and ensure the efficient spread of the progeny virus from cell to cell. Otherwise, infection would be limited to one round of replication. Described as a receptor-destroying enzyme because it cleaves a terminal sialic acid from the cellular receptors. May facilitate viral invasion of the upper airways by cleaving the sialic acid moieties on the mucin of the airway epithelial cells. Likely to plays a role in the budding process through its association with lipid rafts during intracellular transport. May additionally display a raft-association independent effect on budding. Plays a role in the determination of host range restriction on replication and virulence. Sialidase activity in late endosome/lysosome traffic seems to enhance virus replication. This is Neuraminidase from Aves (whales).